Reading from the N-terminus, the 98-residue chain is Co-chaperonin GroES (98 aa).

The protein belongs to the GroES chaperonin family. As to quaternary structure, heptamer of 7 subunits arranged in a ring. Interacts with the chaperonin GroEL.

It localises to the cytoplasm. Its function is as follows. Together with the chaperonin GroEL, plays an essential role in assisting protein folding. The GroEL-GroES system forms a nano-cage that allows encapsulation of the non-native substrate proteins and provides a physical environment optimized to promote and accelerate protein folding. GroES binds to the apical surface of the GroEL ring, thereby capping the opening of the GroEL channel. This chain is Co-chaperonin GroES, found in Paenarthrobacter aurescens (strain TC1).